Here is a 419-residue protein sequence, read N- to C-terminus: O-methyltransferase desB (419 aa).

S-adenosyl-L-methionine is bound by residues 255–256 (GG), Asp280, 306–307 (DF), and Arg323. The active-site Proton acceptor is His326.

It belongs to the class I-like SAM-binding methyltransferase superfamily. Cation-independent O-methyltransferase family. S-adenosyl-L-methionine is required as a cofactor.

The protein operates within secondary metabolite biosynthesis. Non-reducing polyketide synthase; part of the gene cluster that mediates the biosynthesis of the bicoumarin desertorin. The non-reducing polyketide synthase desS first catalyzes the formation of the pentaketidic 4,7-dihydroxy-5-methylcoumarin from acetyl coenzyme A and 4 malonyl coenzyme A molecules. Further O-methylation by desB leads to the formation of 7-demethylsiderin. Then, an oxidative phenol coupling catalyzed by the cytochrome P450 monooxygenase desC forms the 6,8'-dimer M-desertorin A via dimerization the monomeric precursor, 7-demethylsiderin. M-desertorin A is further converted to M-desertorin C. The chain is O-methyltransferase desB from Aspergillus desertorum (Emericella desertorum).